The chain runs to 292 residues: ATP-dependent Clp protease proteolytic subunit 4, chloroplastic (292 aa).

The N-terminal 65 residues, 1-65 (MGTLSLSSSL…LRFANASIEM (65 aa)), are a transit peptide targeting the chloroplast. N-acetylserine is present on serine 66. Serine 158 (nucleophile) is an active-site residue. Histidine 183 is a catalytic residue.

It belongs to the peptidase S14 family. As to quaternary structure, component of the chloroplastic Clp protease core complex which consist of at least 16 proteins: CLPP4 (3 copies), CLPP5 (3 copies), CLPR4 (2 copies), ClpP1 (1 copy), CLPP6 (1 copy), CLPR2 (1 copy), CLPT1 (1 copy), CLPT2 (1 copy) and 3 copies of CLPP3 and/or CLPR1 and/or CLPR3. Interacts with CHIP. The core complex is organized in two heptameric rings, one containing CLPP3,4,5,6 in a 1:2:3:1 ratio and the other CLPP1 and CLPR1,2,3,4 in a 3:1:1:1:1 ratio. Post-translationally, ubiquitinated by CHIP. Mostly expressed in leaves. Also detected in stems, and to a lower extent, in roots (at protein level).

The protein localises to the plastid. Its subcellular location is the chloroplast stroma. It carries out the reaction Hydrolysis of proteins to small peptides in the presence of ATP and magnesium. alpha-casein is the usual test substrate. In the absence of ATP, only oligopeptides shorter than five residues are hydrolyzed (such as succinyl-Leu-Tyr-|-NHMec, and Leu-Tyr-Leu-|-Tyr-Trp, in which cleavage of the -Tyr-|-Leu- and -Tyr-|-Trp bonds also occurs).. In terms of biological role, cleaves peptides in various proteins in a process that requires ATP hydrolysis. Has a chymotrypsin-like activity. Plays a major role in the degradation of misfolded proteins. Essential protein required for chloroplast development and integrity. Essential for Embryogenesis. This chain is ATP-dependent Clp protease proteolytic subunit 4, chloroplastic, found in Arabidopsis thaliana (Mouse-ear cress).